Consider the following 133-residue polypeptide: p53 and DNA damage-regulated protein 1 (133 aa).

This sequence belongs to the prefoldin subunit beta family. Component of the PAQosome complex which is responsible for the biogenesis of several protein complexes and which consists of R2TP complex members RUVBL1, RUVBL2, RPAP3 and PIH1D1, URI complex members PFDN2, PFDN6, PDRG1, UXT and URI1 as well as ASDURF, POLR2E and DNAAF10/WDR92. Predominantly expressed in normal testis and exhibits reduced but detectable expression in other organs.

The protein resides in the cytoplasm. In terms of biological role, may play a role in chaperone-mediated protein folding. The protein is p53 and DNA damage-regulated protein 1 (PDRG1) of Homo sapiens (Human).